Consider the following 221-residue polypeptide: 7-cyano-7-deazaguanine synthase (221 aa).

An ATP-binding site is contributed by 9-19; sequence YSGGMDSFTLL. 4 residues coordinate Zn(2+): cysteine 185, cysteine 193, cysteine 196, and cysteine 199.

The protein belongs to the QueC family. Zn(2+) is required as a cofactor.

It carries out the reaction 7-carboxy-7-deazaguanine + NH4(+) + ATP = 7-cyano-7-deazaguanine + ADP + phosphate + H2O + H(+). It functions in the pathway purine metabolism; 7-cyano-7-deazaguanine biosynthesis. Its function is as follows. Catalyzes the ATP-dependent conversion of 7-carboxy-7-deazaguanine (CDG) to 7-cyano-7-deazaguanine (preQ(0)). This chain is 7-cyano-7-deazaguanine synthase, found in Marinobacter nauticus (strain ATCC 700491 / DSM 11845 / VT8) (Marinobacter aquaeolei).